Here is a 197-residue protein sequence, read N- to C-terminus: Holliday junction branch migration complex subunit RuvA (197 aa).

The segment at methionine 1–leucine 64 is domain I. The segment at threonine 65–proline 143 is domain II. The segment at alanine 144–glutamine 153 is flexible linker. Residues glutamine 153–arginine 197 are domain III.

Belongs to the RuvA family. Homotetramer. Forms an RuvA(8)-RuvB(12)-Holliday junction (HJ) complex. HJ DNA is sandwiched between 2 RuvA tetramers; dsDNA enters through RuvA and exits via RuvB. An RuvB hexamer assembles on each DNA strand where it exits the tetramer. Each RuvB hexamer is contacted by two RuvA subunits (via domain III) on 2 adjacent RuvB subunits; this complex drives branch migration. In the full resolvosome a probable DNA-RuvA(4)-RuvB(12)-RuvC(2) complex forms which resolves the HJ.

The protein localises to the cytoplasm. Functionally, the RuvA-RuvB-RuvC complex processes Holliday junction (HJ) DNA during genetic recombination and DNA repair, while the RuvA-RuvB complex plays an important role in the rescue of blocked DNA replication forks via replication fork reversal (RFR). RuvA specifically binds to HJ cruciform DNA, conferring on it an open structure. The RuvB hexamer acts as an ATP-dependent pump, pulling dsDNA into and through the RuvAB complex. HJ branch migration allows RuvC to scan DNA until it finds its consensus sequence, where it cleaves and resolves the cruciform DNA. The sequence is that of Holliday junction branch migration complex subunit RuvA from Solibacter usitatus (strain Ellin6076).